The following is a 358-amino-acid chain: Chorismate synthase (358 aa).

NADP(+) contacts are provided by Arg46 and Arg52. Residues 123 to 125, 239 to 240, Gly283, 298 to 302, and Arg324 each bind FMN; these read RSS, NA, and KSVAT.

The protein belongs to the chorismate synthase family. As to quaternary structure, homotetramer. FMNH2 is required as a cofactor.

It carries out the reaction 5-O-(1-carboxyvinyl)-3-phosphoshikimate = chorismate + phosphate. It functions in the pathway metabolic intermediate biosynthesis; chorismate biosynthesis; chorismate from D-erythrose 4-phosphate and phosphoenolpyruvate: step 7/7. Functionally, catalyzes the anti-1,4-elimination of the C-3 phosphate and the C-6 proR hydrogen from 5-enolpyruvylshikimate-3-phosphate (EPSP) to yield chorismate, which is the branch point compound that serves as the starting substrate for the three terminal pathways of aromatic amino acid biosynthesis. This reaction introduces a second double bond into the aromatic ring system. The chain is Chorismate synthase from Parabacteroides distasonis (strain ATCC 8503 / DSM 20701 / CIP 104284 / JCM 5825 / NCTC 11152).